Here is a 101-residue protein sequence, read N- to C-terminus: Chaperone modulatory protein CbpM (101 aa).

The protein belongs to the CbpM family.

Interacts with CbpA and inhibits both the DnaJ-like co-chaperone activity and the DNA binding activity of CbpA. Together with CbpA, modulates the activity of the DnaK chaperone system. Does not inhibit the co-chaperone activity of DnaJ. This is Chaperone modulatory protein CbpM from Salmonella agona (strain SL483).